The chain runs to 174 residues: ATP synthase subunit b, organellar chromatophore (174 aa).

A helical transmembrane segment spans residues 26-46 (LINLIIVIGVLFTFLRGFLGE).

This sequence belongs to the ATPase B chain family. F-type ATPases have 2 components, F(1) - the catalytic core - and F(0) - the membrane proton channel. F(1) has five subunits: alpha(3), beta(3), gamma(1), delta(1), epsilon(1). F(0) has four main subunits: a(1), b(1), b'(1) and c(10-14). The alpha and beta chains form an alternating ring which encloses part of the gamma chain. F(1) is attached to F(0) by a central stalk formed by the gamma and epsilon chains, while a peripheral stalk is formed by the delta, b and b' chains.

The protein resides in the plastid. It localises to the organellar chromatophore thylakoid membrane. Its function is as follows. F(1)F(0) ATP synthase produces ATP from ADP in the presence of a proton or sodium gradient. F-type ATPases consist of two structural domains, F(1) containing the extramembraneous catalytic core and F(0) containing the membrane proton channel, linked together by a central stalk and a peripheral stalk. During catalysis, ATP synthesis in the catalytic domain of F(1) is coupled via a rotary mechanism of the central stalk subunits to proton translocation. In terms of biological role, component of the F(0) channel, it forms part of the peripheral stalk, linking F(1) to F(0). The chain is ATP synthase subunit b, organellar chromatophore from Paulinella chromatophora.